Reading from the N-terminus, the 322-residue chain is MADWSLLPNDLLELIVGHLETSFEIVLFRSVCSSWRSVVPPQDQSRCLSIKTHDISFNAGFSFSGQPTDHPLFGSTLTKIPIYLVKFWTPFGDDYLLAEMREREGGEPMFLLSPLSSNRIIYGMGINKVLFNSLTSPIIPFGQYYEITYSEKQPIRYRYGLPCHLWDKLEWVEITERVEFLKLDSEDSRDFAVLFAGRMCNLVMYRSRNMSWTQVVEHPEKYAYQDLVAFKGKFYALDSSGRGRVFVVELSLEVMEIPSVRGSQQSSKENLVLSGEELLLVQRFTPEVRHYDEYLYTWFRVFRLDEEEGRESGFKLMTLTTE.

The 49-residue stretch at 2 to 50 (ADWSLLPNDLLELIVGHLETSFEIVLFRSVCSSWRSVVPPQDQSRCLSI) folds into the F-box domain.

The protein is F-box protein At2g16300 of Arabidopsis thaliana (Mouse-ear cress).